Consider the following 395-residue polypeptide: Phosphoprotein (395 aa).

Positions phenylalanine 143 to aspartate 157 are enriched in polar residues. The tract at residues phenylalanine 143 to glycine 183 is disordered. Positions proline 158 to lysine 172 are enriched in basic and acidic residues. The tract at residues glutamate 220–serine 283 is multimerization.

This sequence belongs to the rubulavirus/avulavirus P protein family. As to quaternary structure, homotetramer. Interacts (via multimerization domain) with polymerase L; this interaction forms the polymerase L-P complex. Interacts (via N-terminus) with N0 (via Ncore); this interaction allows P to chaperon N0 to avoid N polymerization before encapsidation. Interacts (via C-terminus) with N-RNA template; this interaction positions the polymerase on the template for both transcription and replication.

Its function is as follows. Essential cofactor of the RNA polymerase L that plays a central role in the transcription and replication by forming the polymerase complex with RNA polymerase L and recruiting L to the genomic N-RNA template for RNA synthesis. Also plays a central role in the encapsidation of nascent RNA chains by forming the encapsidation complex with the nucleocapsid protein N (N-P complex). Acts as a chaperone for newly synthesized free N protein, so-called N0, allowing encapsidation of nascent RNA chains during replication. The nucleoprotein protein N prevents excessive phosphorylation of P, which leads to down-regulation of viral transcription/ replication. Participates, together with N, in the formation of viral factories (viroplasms), which are large inclusions in the host cytoplasm where replication takes place. The polypeptide is Phosphoprotein (P/V) (Simian virus 41 (SV41)).